Here is a 512-residue protein sequence, read N- to C-terminus: Cytochrome P450 monooxygenase TwmD (512 aa).

Residue Cys454 participates in heme binding.

Belongs to the cytochrome P450 family. Heme serves as cofactor.

The protein operates within secondary metabolite biosynthesis. In terms of biological role, cytochrome P450 monooxygenase; part of the gene cluster that mediates the biosynthesis of wortmanamides A and B, reduced long-chain polyketides amidated with a specific omega-amino acid, 5-aminopentanoic acid (5PA). The PKS modules of TwmB are involved in the synthesis of the polyketide backbone, whereas the non-canonical C domain of TwmB is a bonafide condensation domain that specifically selects 5PA and catalyzes amidation to release polyketide chain. The C domain clearly prefers C16 and C18 fatty acyl substrates, which is consistent with simultaneous formation of both octaketide and nonaketide acyl amides wortmanamides A and B. Because TwmB lacks a designated enoylreductase (ER) domain, the required activity is provided the enoyl reductase TwmE. The roles of the remaining enzymes have still to be clarified. This Talaromyces wortmannii (Penicillium wortmannii) protein is Cytochrome P450 monooxygenase TwmD.